Reading from the N-terminus, the 221-residue chain is Probable septum site-determining protein MinC (221 aa).

Belongs to the MinC family. As to quaternary structure, interacts with MinD and FtsZ.

Its function is as follows. Cell division inhibitor that blocks the formation of polar Z ring septums. Rapidly oscillates between the poles of the cell to destabilize FtsZ filaments that have formed before they mature into polar Z rings. Prevents FtsZ polymerization. The chain is Probable septum site-determining protein MinC from Aliivibrio fischeri (strain ATCC 700601 / ES114) (Vibrio fischeri).